A 359-amino-acid chain; its full sequence is GDSL esterase/lipase At5g03610 (359 aa).

An N-terminal signal peptide occupies residues Met-1 to Gly-22. Residue Ser-50 is the Nucleophile of the active site. Residues Asn-136, Asn-236, and Asn-259 are each glycosylated (N-linked (GlcNAc...) asparagine). Catalysis depends on residues Asp-332 and His-335.

This sequence belongs to the 'GDSL' lipolytic enzyme family.

The protein localises to the secreted. The sequence is that of GDSL esterase/lipase At5g03610 from Arabidopsis thaliana (Mouse-ear cress).